The chain runs to 350 residues: Twinfilin-1 (350 aa).

ADF-H domains follow at residues 4–139 (QTGI…KYLA) and 177–313 (GIAF…EEVH). Positions 316–350 (QHAHKQNFAKPKGPAGKRGIRRLIRGPAEAETAND) are disordered.

Belongs to the actin-binding proteins ADF family. Twinfilin subfamily. In terms of assembly, interacts with G-actin; ADP-actin form.

The protein resides in the cytoplasm. Its subcellular location is the cytoskeleton. Actin-binding protein involved in motile and morphological processes. Inhibits actin polymerization, likely by sequestering G-actin. The sequence is that of Twinfilin-1 (twf1) from Xenopus tropicalis (Western clawed frog).